A 310-amino-acid chain; its full sequence is HPr kinase/phosphorylase (310 aa).

Catalysis depends on residues His136 and Lys157. 151–158 serves as a coordination point for ATP; sequence GDSGIGKS. Ser158 contributes to the Mg(2+) binding site. The active-site Proton acceptor; for phosphorylation activity. Proton donor; for dephosphorylation activity is Asp175. The tract at residues 199 to 208 is important for the catalytic mechanism of both phosphorylation and dephosphorylation; it reads LEIRGLGIIN. Glu200 contributes to the Mg(2+) binding site. Arg241 is an active-site residue. Positions 262 to 267 are important for the catalytic mechanism of dephosphorylation; sequence PVRPGR.

It belongs to the HPrK/P family. Homohexamer. Requires Mg(2+) as cofactor.

The catalysed reaction is [HPr protein]-L-serine + ATP = [HPr protein]-O-phospho-L-serine + ADP + H(+). The enzyme catalyses [HPr protein]-O-phospho-L-serine + phosphate + H(+) = [HPr protein]-L-serine + diphosphate. Its function is as follows. Catalyzes the ATP- as well as the pyrophosphate-dependent phosphorylation of a specific serine residue in HPr, a phosphocarrier protein of the phosphoenolpyruvate-dependent sugar phosphotransferase system (PTS). HprK/P also catalyzes the pyrophosphate-producing, inorganic phosphate-dependent dephosphorylation (phosphorolysis) of seryl-phosphorylated HPr (P-Ser-HPr). The two antagonistic activities of HprK/P are regulated by several intracellular metabolites, which change their concentration in response to the absence or presence of rapidly metabolisable carbon sources (glucose, fructose, etc.) in the growth medium. Therefore, by controlling the phosphorylation state of HPr, HPrK/P is a sensor enzyme that plays a major role in the regulation of carbon metabolism and sugar transport: it mediates carbon catabolite repression (CCR), and regulates PTS-catalyzed carbohydrate uptake and inducer exclusion. The sequence is that of HPr kinase/phosphorylase from Staphylococcus epidermidis (strain ATCC 35984 / DSM 28319 / BCRC 17069 / CCUG 31568 / BM 3577 / RP62A).